Reading from the N-terminus, the 120-residue chain is UPF0231 protein YacL (120 aa).

This sequence belongs to the UPF0231 family.

The protein is UPF0231 protein YacL (yacL) of Shigella flexneri.